The chain runs to 1220 residues: Protein patched homolog 1 (1220 aa).

The interval 1-27 (MASDPRDPGPAGGVFGDLPPSYTRSPP) is disordered. Residues 1 to 84 (MASDPRDPGP…GCHIQRHCGK (84 aa)) are Cytoplasmic-facing. A helical membrane pass occupies residues 85–105 (VLFIGLLVFGALSVGLRVAAI). Residues 106–419 (ETDIEKLWVE…LNDIMKSFSD (314 aa)) are Extracellular-facing. Residue Asn397 is glycosylated (N-linked (GlcNAc...) asparagine). A helical membrane pass occupies residues 420 to 440 (VSVIRVAGGYLLMLAYACVTM). The SSD domain maps to 421-579 (SVIRVAGGYL…LLIFPAILSL (159 aa)). The Cytoplasmic segment spans residues 441–449 (LRWDCAKSQ). A helical membrane pass occupies residues 450-470 (GAVGLAGVLLVALSVAAGLGL). The Extracellular portion of the chain corresponds to 471–484 (CSLLGLSFNAATTQ). Residues 485 to 505 (VLPSLALGIGVDDMFLLGHSF) form a helical membrane-spanning segment. The Cytoplasmic portion of the chain corresponds to 506 to 528 (TETRSNIPFKERTGDCLRRTGTS). Residues 529 to 549 (VALTSVNNMIAFFMAALVPIP) traverse the membrane as a helical segment. Residues 550-558 (ALRAFSLQA) lie on the Extracellular side of the membrane. Residues 559–579 (AVVVVFNFAMALLIFPAILSL) form a helical membrane-spanning segment. At 580–739 (DLHRREDKRL…APLLLKPETK (160 aa)) the chain is on the cytoplasmic side. A helical transmembrane segment spans residues 740 to 760 (TVVVVVFVALLSLSLYGTTMV). Topologically, residues 761 to 1016 (HDGLYLTDIV…WEQYIGLRHW (256 aa)) are extracellular. Residues Asn865 and Asn888 are each glycosylated (N-linked (GlcNAc...) asparagine). A helical transmembrane segment spans residues 1017-1037 (FLLSISVVLACTFLVCAILLL). Residues 1038-1044 (NPWTAGV) lie on the Cytoplasmic side of the membrane. The chain crosses the membrane as a helical span at residues 1045 to 1065 (IVFILPMMTVELFGIMGLIGI). Over 1066 to 1072 (KLSAIPV) the chain is Extracellular. The helical transmembrane segment at 1073–1093 (VILIASVGIGVEFTVHIALGF) threads the bilayer. The Cytoplasmic segment spans residues 1094–1110 (LTAIGDRNTRSAVAMEH). The chain crosses the membrane as a helical span at residues 1111–1131 (MFAPVIDGAISTLLGVLMLAG). The Extracellular segment spans residues 1132 to 1143 (SEFDFIMRYFFA). A helical membrane pass occupies residues 1144 to 1164 (VLAILTLLGILNGLVLLPVLL). The Cytoplasmic segment spans residues 1165–1220 (SLMGPPAEVVPANNANHLQSPSPEPMPPPMNHHGYYAGHIPKASHQAFSETSDSEY).

The protein belongs to the patched family. In terms of processing, glycosylation is necessary for SHH binding. Detected in embryonic presomitic mesoderm, neuroectoderm, tissue surrounding the notochord, ventral neural tube.

It is found in the membrane. In terms of biological role, acts as a receptor for sonic hedgehog (SHH), indian hedgehog (IHH) and desert hedgehog (DHH). Associates with the smoothened protein (SMO) to transduce the hedgehog's proteins signal. In Danio rerio (Zebrafish), this protein is Protein patched homolog 1 (ptch1).